We begin with the raw amino-acid sequence, 56 residues long: Small ribosomal subunit protein uS14 (56 aa).

Zn(2+)-binding residues include Cys-21, Cys-24, Cys-39, and Cys-42.

Belongs to the universal ribosomal protein uS14 family. Zn(2+) serves as cofactor.

This chain is Small ribosomal subunit protein uS14 (rps29A), found in Guillardia theta (Cryptophyte).